We begin with the raw amino-acid sequence, 510 residues long: Secreted RxLR effector protein 24 (510 aa).

The N-terminal stretch at 1–18 is a signal peptide; that stretch reads MRGAFYVAIALLGSHTAA. The RxLR-dEER motif lies at 47-68; that stretch reads RVLRERRDSKDKLTVHAGAEER.

This sequence belongs to the RxLR effector family.

The protein resides in the secreted. Its subcellular location is the host nucleus. Its function is as follows. Secreted effector that acts as an elicitor that induces cell death in host plant cells. This chain is Secreted RxLR effector protein 24, found in Plasmopara viticola (Downy mildew of grapevine).